The following is a 402-amino-acid chain: Hyaluronan and proteoglycan link protein 4 (402 aa).

An N-terminal signal peptide occupies residues 1-29; the sequence is MVCARAALGPGALWAAAWGVLLLTAPAGA. The Ig-like C2-type domain maps to 46 to 161; it reads SVVVQTAPGQ…DAGMVKLDLE (116 aa). 5 disulfide bridges follow: cysteine 68-cysteine 143, cysteine 185-cysteine 266, cysteine 209-cysteine 230, cysteine 293-cysteine 363, and cysteine 318-cysteine 339. N-linked (GlcNAc...) asparagine glycosylation is present at asparagine 132. Link domains are found at residues 163–268 and 273–365; these read VVFP…FCFT and GRVF…YCYR.

This sequence belongs to the HAPLN family. Expressed predominantly in brain.

It localises to the secreted. The protein resides in the extracellular space. The protein localises to the extracellular matrix. Essential for the proper localization of brevican (BCAN), mainly as a perineuronal nets (PNNs)-type deposition in the brainstem and cerebellum thereby playing a key role in the formation and structural organization of PNNs. Contributes to the formation and transmission of inhibitory GABAergic synapses between Purkinje cells and deep cerebellar nuclei neurons. The protein is Hyaluronan and proteoglycan link protein 4 (HAPLN4) of Homo sapiens (Human).